The sequence spans 158 residues: Hypoxanthine DNA glycosylase (158 aa).

Residue Asn39 is part of the active site.

It belongs to the uracil-DNA glycosylase (UDG) superfamily. Type 6 (HDG) family.

Its function is as follows. Excises hypoxanthine, a deamination product of adenine, from double-stranded DNA. Acts on double-stranded DNA containing G/I, T/I, A/I and C/I base pairs, but not on single-stranded inosine-containing DNA. Also has minor xanthine DNA glycosylase activity. Lacks any detectable uracil-DNA glycosylase activity. In Methanosarcina acetivorans (strain ATCC 35395 / DSM 2834 / JCM 12185 / C2A), this protein is Hypoxanthine DNA glycosylase.